The following is a 253-amino-acid chain: Exosome complex component Rrp4 (253 aa).

The 74-residue stretch at 80-153 (GDIVIGIVVD…SRGPILTVQD (74 aa)) folds into the S1 motif domain.

The protein belongs to the RRP4 family. In terms of assembly, component of the archaeal exosome complex. Forms a trimer of Rrp4 and/or Csl4 subunits. The trimer associates with a hexameric ring-like arrangement composed of 3 Rrp41-Rrp42 heterodimers.

The protein resides in the cytoplasm. Functionally, non-catalytic component of the exosome, which is a complex involved in RNA degradation. Increases the RNA binding and the efficiency of RNA degradation. Confers strong poly(A) specificity to the exosome. This Ignisphaera aggregans (strain DSM 17230 / JCM 13409 / AQ1.S1) protein is Exosome complex component Rrp4.